Consider the following 64-residue polypeptide: Translation machinery-associated protein 7B (64 aa).

The disordered stretch occupies residues 1-38 (MSSHEGGKKKALKQPKKQAKEMDEEEKAFKQKQKEEQK). The span at 27-38 (KAFKQKQKEEQK) shows a compositional bias: basic and acidic residues.

Belongs to the TMA7 family.

This Homo sapiens (Human) protein is Translation machinery-associated protein 7B.